Here is a 100-residue protein sequence, read N- to C-terminus: MISLFHGLFLSLILFILGLTSLIVRRNILFMLISLEIMMNAAALALVVSGSYWKQSDGQIMYILAITLAASEASIALALLLQLYRRQRTLNINALSEMSG.

Helical transmembrane passes span 4-24 (LFHG…SLIV), 28-48 (ILFM…ALVV), and 60-80 (IMYI…LALL).

This sequence belongs to the complex I subunit 4L family. In terms of assembly, NDH-1 is composed of 13 different subunits. Subunits NuoA, H, J, K, L, M, N constitute the membrane sector of the complex.

It is found in the cell membrane. It carries out the reaction a quinone + NADH + 5 H(+)(in) = a quinol + NAD(+) + 4 H(+)(out). NDH-1 shuttles electrons from NADH, via FMN and iron-sulfur (Fe-S) centers, to quinones in the respiratory chain. The immediate electron acceptor for the enzyme in this species is believed to be ubiquinone. Couples the redox reaction to proton translocation (for every two electrons transferred, four hydrogen ions are translocated across the cytoplasmic membrane), and thus conserves the redox energy in a proton gradient. The chain is NADH-quinone oxidoreductase subunit K from Buchnera aphidicola subsp. Schizaphis graminum (strain Sg).